The chain runs to 41 residues: Large ribosomal subunit protein bL36 (41 aa).

It belongs to the bacterial ribosomal protein bL36 family.

The chain is Large ribosomal subunit protein bL36 from Edwardsiella ictaluri (strain 93-146).